We begin with the raw amino-acid sequence, 310 residues long: ADP-L-glycero-D-manno-heptose-6-epimerase (310 aa).

NADP(+) contacts are provided by residues 10 to 11, 31 to 32, Lys-38, Lys-53, 75 to 79, and Asn-92; these read FI, DN, and EGACS. The active-site Proton acceptor is the Tyr-140. Lys-144 contacts NADP(+). Position 169 (Asn-169) interacts with substrate. NADP(+) is bound by residues Val-170 and Lys-178. Lys-178 serves as the catalytic Proton acceptor. Substrate-binding positions include Ser-180, His-187, 201–204, Arg-209, and Tyr-272; that span reads FSGS.

This sequence belongs to the NAD(P)-dependent epimerase/dehydratase family. HldD subfamily. In terms of assembly, homopentamer. NADP(+) is required as a cofactor.

It catalyses the reaction ADP-D-glycero-beta-D-manno-heptose = ADP-L-glycero-beta-D-manno-heptose. The protein operates within nucleotide-sugar biosynthesis; ADP-L-glycero-beta-D-manno-heptose biosynthesis; ADP-L-glycero-beta-D-manno-heptose from D-glycero-beta-D-manno-heptose 7-phosphate: step 4/4. Its function is as follows. Catalyzes the interconversion between ADP-D-glycero-beta-D-manno-heptose and ADP-L-glycero-beta-D-manno-heptose via an epimerization at carbon 6 of the heptose. This Pectobacterium atrosepticum (strain SCRI 1043 / ATCC BAA-672) (Erwinia carotovora subsp. atroseptica) protein is ADP-L-glycero-D-manno-heptose-6-epimerase.